The following is a 636-amino-acid chain: Rust resistance kinase Lr10 (636 aa).

An N-terminal signal peptide occupies residues 1–24 (MSKLLVIALLLLPLINHGIYLATA). The Extracellular portion of the chain corresponds to 25-276 (WDDQDFFKYC…MPDPHGSHIK (252 aa)). N-linked (GlcNAc...) asparagine glycans are attached at residues N56, N177, and N222. A helical transmembrane segment spans residues 277–297 (VIAATSSVAAFVALLLTVATV). At 298 to 636 (LYLSLKTRYN…FVSSENELMS (339 aa)) the chain is on the cytoplasmic side. A Protein kinase domain is found at 339-628 (RRFKEKVGQG…SLQMPPKPFV (290 aa)). Residues 345–353 (VGQGGFGSV) and K367 contribute to the ATP site. The active-site Proton acceptor is D466.

It belongs to the protein kinase superfamily. Ser/Thr protein kinase family. In terms of tissue distribution, specifically expressed in the aerial parts of the plant.

It is found in the cell membrane. It catalyses the reaction L-seryl-[protein] + ATP = O-phospho-L-seryl-[protein] + ADP + H(+). The enzyme catalyses L-threonyl-[protein] + ATP = O-phospho-L-threonyl-[protein] + ADP + H(+). This is Rust resistance kinase Lr10 from Triticum aestivum (Wheat).